The following is a 510-amino-acid chain: Aromatic-L-amino-acid decarboxylase (510 aa).

Polar residues predominate over residues 1–17 (MSHIPISNTIPTKQTDG). Positions 1 to 28 (MSHIPISNTIPTKQTDGNGKANISPDKL) are disordered. Thr-117 contributes to the substrate binding site. Pyridoxal 5'-phosphate is bound by residues Ala-183, Ser-184, His-227, Asp-305, and Asn-334. Residue His-227 coordinates substrate. The active site involves His-227. Residue Lys-337 is modified to N6-(pyridoxal phosphate)lysine. The tract at residues 358 to 384 (NAFNVDPLYLKHDMQGSAPDYRHWQIP) is disordered.

Belongs to the group II decarboxylase family. Homodimer. Requires pyridoxal 5'-phosphate as cofactor. Hypoderm isoform is expressed only in hypodermal epithelium and the CNS isoform only in central nervous system. Expressed in the adult head (at protein level).

The enzyme catalyses L-dopa + H(+) = dopamine + CO2. It catalyses the reaction 5-hydroxy-L-tryptophan + H(+) = serotonin + CO2. Its function is as follows. Catalyzes the decarboxylation of L-3,4-dihydroxyphenylalanine (L-DOPA) to dopamine and L-5-hydroxytryptophan (5-HTP) to serotonin. Catalyzes the formation of serotonin more efficiently than dopamine. Displays no activity to tyrosine. Variation in the synthesis of bioamines may be a factor contributing to natural variation in life span. This chain is Aromatic-L-amino-acid decarboxylase (Ddc), found in Drosophila melanogaster (Fruit fly).